The following is a 315-amino-acid chain: tRNA-specific adenosine deaminase subunit tad3 (315 aa).

Positions 158–299 (KRIESILEDL…AELNHRYLAY (142 aa)) constitute a CMP/dCMP-type deaminase domain. Zn(2+)-binding residues include His-211, Cys-253, and Cys-256.

This sequence belongs to the cytidine and deoxycytidylate deaminase family. ADAT3 subfamily. In terms of assembly, heterodimer with Tad2.

The protein resides in the cytoplasm. The protein localises to the nucleus. Its function is as follows. Structural subunit of tRNA-specific adenosine deaminase, which deaminates adenosine-34 (the first, also called wobble position of the anticodon) to inosine in many tRNAs. Inosine-34 allows the decoding of 3 different nucleotides at the third position of mRNA codons, as inosine is able to pair with U, C, and A. The wobble inosine tRNA modification is essential for cell cycle progression in the G1/S and G2/M transitions in fission yeast. The chain is tRNA-specific adenosine deaminase subunit tad3 (tad3) from Schizosaccharomyces pombe (strain 972 / ATCC 24843) (Fission yeast).